Here is an 80-residue protein sequence, read N- to C-terminus: Probable Rubredoxin-1 (80 aa).

One can recognise a Rubredoxin-like domain in the interval 19 to 72 (YRKYKCKVCGWVYDPLKGDPSQNIPPKTPFEELPDTWICPVCRGKVGKESFEPL). Cys-24, Cys-27, Cys-57, and Cys-60 together coordinate Fe cation.

This sequence belongs to the rubredoxin family. Fe(3+) is required as a cofactor.

Rubredoxin is a small nonheme, iron protein lacking acid-labile sulfide. Its single Fe, chelated to 4 Cys, functions as an electron acceptor and may also stabilize the conformation of the molecule. The polypeptide is Probable Rubredoxin-1 (Methanocaldococcus jannaschii (strain ATCC 43067 / DSM 2661 / JAL-1 / JCM 10045 / NBRC 100440) (Methanococcus jannaschii)).